Consider the following 406-residue polypeptide: Argininosuccinate synthase (406 aa).

9-17 (AYSGGLDTS) is an ATP binding site. Position 86 (Tyr-86) interacts with L-citrulline. Gly-116 is a binding site for ATP. Thr-118, Asn-122, and Asp-123 together coordinate L-aspartate. Asn-122 contributes to the L-citrulline binding site. Residues Arg-126, Ser-174, Ser-183, Glu-259, and Tyr-271 each coordinate L-citrulline.

The protein belongs to the argininosuccinate synthase family. Type 1 subfamily. As to quaternary structure, homotetramer.

It is found in the cytoplasm. It catalyses the reaction L-citrulline + L-aspartate + ATP = 2-(N(omega)-L-arginino)succinate + AMP + diphosphate + H(+). It functions in the pathway amino-acid biosynthesis; L-arginine biosynthesis; L-arginine from L-ornithine and carbamoyl phosphate: step 2/3. In Geobacillus thermodenitrificans (strain NG80-2), this protein is Argininosuccinate synthase.